Consider the following 71-residue polypeptide: Protein SlyX homolog (71 aa).

Residues 49 to 71 (KIKESQSSSSMMSNEPEPPPPHY) are disordered.

Belongs to the SlyX family.

This chain is Protein SlyX homolog, found in Pseudoalteromonas translucida (strain TAC 125).